Reading from the N-terminus, the 523-residue chain is Putative glycerol-3-phosphate transporter 1 (523 aa).

The next 12 membrane-spanning stretches (helical) occupy residues 29–49, 102–122, 133–153, 163–183, 196–216, 228–248, 306–326, 344–364, 368–388, 402–422, 444–464, and 468–488; these read LSYS…YASY, VLLG…MYFA, IFLT…GVGY, FLIM…SVVA, LIMG…SLIA, FVVP…FLPV, FALC…WLPF, GNLS…AGYI, IGAR…ALFF, SLMF…TTAV, AIID…TGYI, and GSWT…GLLL.

Belongs to the major facilitator superfamily. Organophosphate:Pi antiporter (OPA) (TC 2.A.1.4) family.

It is found in the membrane. The polypeptide is Putative glycerol-3-phosphate transporter 1 (Arabidopsis thaliana (Mouse-ear cress)).